Consider the following 199-residue polypeptide: Large ribosomal subunit protein bL9 (199 aa).

Residues 169-199 are disordered; that stretch reads TGGFTEEYDPNAEPGEIPTELLEGGEEAAEA.

The protein belongs to the bacterial ribosomal protein bL9 family.

Functionally, binds to the 23S rRNA. The sequence is that of Large ribosomal subunit protein bL9 from Novosphingobium aromaticivorans (strain ATCC 700278 / DSM 12444 / CCUG 56034 / CIP 105152 / NBRC 16084 / F199).